The sequence spans 471 residues: 3-isopropylmalate dehydratase large subunit (471 aa).

Positions 347, 407, and 410 each coordinate [4Fe-4S] cluster.

It belongs to the aconitase/IPM isomerase family. LeuC type 1 subfamily. In terms of assembly, heterodimer of LeuC and LeuD. Requires [4Fe-4S] cluster as cofactor.

The enzyme catalyses (2R,3S)-3-isopropylmalate = (2S)-2-isopropylmalate. It functions in the pathway amino-acid biosynthesis; L-leucine biosynthesis; L-leucine from 3-methyl-2-oxobutanoate: step 2/4. Functionally, catalyzes the isomerization between 2-isopropylmalate and 3-isopropylmalate, via the formation of 2-isopropylmaleate. This is 3-isopropylmalate dehydratase large subunit from Geobacillus kaustophilus (strain HTA426).